The chain runs to 346 residues: tRNA N6-adenosine threonylcarbamoyltransferase (346 aa).

Residues histidine 111 and histidine 115 each coordinate Fe cation. Residues leucine 134–glycine 138, aspartate 167, glycine 180, and asparagine 279 each bind substrate. Aspartate 307 lines the Fe cation pocket.

This sequence belongs to the KAE1 / TsaD family. The cofactor is Fe(2+).

Its subcellular location is the cytoplasm. It catalyses the reaction L-threonylcarbamoyladenylate + adenosine(37) in tRNA = N(6)-L-threonylcarbamoyladenosine(37) in tRNA + AMP + H(+). Its function is as follows. Required for the formation of a threonylcarbamoyl group on adenosine at position 37 (t(6)A37) in tRNAs that read codons beginning with adenine. Is involved in the transfer of the threonylcarbamoyl moiety of threonylcarbamoyl-AMP (TC-AMP) to the N6 group of A37, together with TsaE and TsaB. TsaD likely plays a direct catalytic role in this reaction. The protein is tRNA N6-adenosine threonylcarbamoyltransferase of Burkholderia mallei (strain ATCC 23344).